Reading from the N-terminus, the 163-residue chain is Transcriptional repressor NrdR (163 aa).

The segment at 1–22 (MRCPKCQSLKSSVIDSRQAEDG) is disordered. Residues 3 to 34 (CPKCQSLKSSVIDSRQAEDGNTIRRRRSCDQC) fold into a zinc finger. The region spanning 49–139 (LVVVKKDGTR…VYRSFKDVGE (91 aa)) is the ATP-cone domain.

It belongs to the NrdR family. The cofactor is Zn(2+).

Its function is as follows. Negatively regulates transcription of bacterial ribonucleotide reductase nrd genes and operons by binding to NrdR-boxes. This Streptococcus suis (strain 98HAH33) protein is Transcriptional repressor NrdR.